The following is a 369-amino-acid chain: Somatostatin receptor type 2 (369 aa).

Over 1–43 (MEMSSEQLNGSQVWVSSPFDLNGSLGPSNGSNQTEPYYDMTSN) the chain is Extracellular. 4 N-linked (GlcNAc...) asparagine glycosylation sites follow: Asn9, Asn22, Asn29, and Asn32. A helical membrane pass occupies residues 44-67 (AVLTFIYFVVCVVGLCGNTLVIYV). Residues 68–78 (ILRYAKMKTIT) are Cytoplasmic-facing. The chain crosses the membrane as a helical span at residues 79–103 (NIYILNLAIADELFMLGLPFLAMQV). The Extracellular segment spans residues 104-118 (ALVHWPFGKAICRVV). Cysteines 115 and 193 form a disulfide. A helical membrane pass occupies residues 119–138 (MTVDGINQFTSIFCLTVMSI). The Cytoplasmic segment spans residues 139 to 161 (DRYLAVVHPIKSAKWRRPRTAKM). Residues 162–181 (INVAVWCVSLLVILPIMIYA) form a helical membrane-spanning segment. The Extracellular portion of the chain corresponds to 182-207 (GLRSNQWGRSSCTINWPGESGAWYTG). Residues 208–229 (FIIYAFILGFLVPLTIICLCYL) traverse the membrane as a helical segment. At 230-253 (FIIIKVKSSGIRVGSSKRKKSEKK) the chain is on the cytoplasmic side. The chain crosses the membrane as a helical span at residues 254-278 (VTRMVSIVVAVFIFCWLPFYIFNVS). The Extracellular segment spans residues 279–288 (SVSVAISPTP). The helical transmembrane segment at 289–303 (ALKGMFDFVVILTYA) threads the bilayer. Residues 304–369 (NSCANPILYA…LLNGDLQTSI (66 aa)) are Cytoplasmic-facing. Residue Cys328 is the site of S-palmitoyl cysteine attachment. Phosphoserine is present on residues Ser341, Ser343, and Ser348. Residues Thr353 and Thr354 each carry the phosphothreonine modification.

Belongs to the G-protein coupled receptor 1 family. Homodimer and heterodimer with SSTR3 and SSTR5. Heterodimerization with SSTR3 inactivates SSTR3 receptor function. Heterodimerization with SSTR5 is enhanced by agonist stimulation of SSTR2 and increases SSTR2 cell growth inhibition activity. Following agonist stimulation, homodimers dissociate into monomers which is required for receptor internalization. Interacts with beta-arrestin; this interaction is necessary for receptor internalization and is destabilized by heterodimerization with SSTR5 which results in increased recycling of SSTR2 to the cell surface. Interacts (via C-terminus) with SHANK1 (via PDZ domain). In terms of processing, phosphorylated on serine and threonine residues in response to agonist stimulation, leading to receptor desensitization and rapid internalization. Phosphorylated to a greater extent on serine than threonine residues. Threonine phosphorylation is required for arrestin binding and receptor endocytosis but is not necessary for desensitization. In terms of tissue distribution, cerebrum and kidney.

The protein localises to the cell membrane. It is found in the cytoplasm. In terms of biological role, receptor for somatostatin-14 and -28. This receptor is coupled via pertussis toxin sensitive G proteins to inhibition of adenylyl cyclase. In addition it stimulates phosphotyrosine phosphatase and PLC via pertussis toxin insensitive as well as sensitive G proteins. Inhibits calcium entry by suppressing voltage-dependent calcium channels. Acts as the functionally dominant somatostatin receptor in pancreatic alpha- and beta-cells where it mediates the inhibitory effect of somatostatin-14 on hormone secretion. Inhibits cell growth through enhancement of MAPK1 and MAPK2 phosphorylation and subsequent up-regulation of CDKN1B. Stimulates neuronal migration and axon outgrowth and may participate in neuron development and maturation during brain development. Mediates negative regulation of insulin receptor signaling through PTPN6. Inactivates SSTR3 receptor function following heterodimerization. The chain is Somatostatin receptor type 2 (Sstr2) from Mus musculus (Mouse).